The primary structure comprises 176 residues: Inorganic pyrophosphatase (176 aa).

K31, R45, and Y57 together coordinate substrate. Mg(2+)-binding residues include D67, D72, and D104. Y142 provides a ligand contact to substrate.

It belongs to the PPase family. In terms of assembly, homohexamer. Requires Mg(2+) as cofactor.

It is found in the cytoplasm. The enzyme catalyses diphosphate + H2O = 2 phosphate + H(+). Functionally, catalyzes the hydrolysis of inorganic pyrophosphate (PPi) forming two phosphate ions. This chain is Inorganic pyrophosphatase, found in Haemophilus influenzae (strain ATCC 51907 / DSM 11121 / KW20 / Rd).